Here is a 245-residue protein sequence, read N- to C-terminus: rRNA adenine N-6-methyltransferase (245 aa).

S-adenosyl-L-methionine contacts are provided by asparagine 10, leucine 12, glycine 37, glutamate 58, aspartate 83, and serine 100.

Belongs to the class I-like SAM-binding methyltransferase superfamily. rRNA adenine N(6)-methyltransferase family.

The enzyme catalyses adenosine(2085) in 23S rRNA + 2 S-adenosyl-L-methionine = N(6)-dimethyladenosine(2085) in 23S rRNA + 2 S-adenosyl-L-homocysteine + 2 H(+). In terms of biological role, this protein produces a dimethylation of the adenine residue at position 2085 in 23S rRNA, resulting in reduced affinity between ribosomes and macrolide-lincosamide-streptogramin B antibiotics. The polypeptide is rRNA adenine N-6-methyltransferase (Streptococcus sanguinis).